The chain runs to 191 residues: Protein GrpE (191 aa).

Basic and acidic residues predominate over residues M1–D15. The tract at residues M1 to E35 is disordered.

This sequence belongs to the GrpE family. As to quaternary structure, homodimer.

It localises to the cytoplasm. Its function is as follows. Participates actively in the response to hyperosmotic and heat shock by preventing the aggregation of stress-denatured proteins, in association with DnaK and GrpE. It is the nucleotide exchange factor for DnaK and may function as a thermosensor. Unfolded proteins bind initially to DnaJ; upon interaction with the DnaJ-bound protein, DnaK hydrolyzes its bound ATP, resulting in the formation of a stable complex. GrpE releases ADP from DnaK; ATP binding to DnaK triggers the release of the substrate protein, thus completing the reaction cycle. Several rounds of ATP-dependent interactions between DnaJ, DnaK and GrpE are required for fully efficient folding. The protein is Protein GrpE of Francisella philomiragia subsp. philomiragia (strain ATCC 25017 / CCUG 19701 / FSC 153 / O#319-036).